The primary structure comprises 487 residues: Probable glutamate receptor (487 aa).

The N-terminal stretch at 1 to 23 is a signal peptide; it reads MDKGLHFIFCVVTAVLLLRESSQ. The Extracellular segment spans residues 24–169; that stretch reads TGAMRNDDAM…FFHFLAPFSK (146 aa). A glycan (N-linked (GlcNAc...) asparagine) is linked at Asn104. A helical transmembrane segment spans residues 170–190; the sequence is ETWTGLLFAYVLTCVCLFLVA. Residues 191–235 lie on the Cytoplasmic side of the membrane; the sequence is RLSPCEWNEPKNEENHFTFLNSLWFGAGALTLQGVTPRPKAFSVR. Residues 236–256 form a helical membrane-spanning segment; sequence VIAAIWWLFTIALLAAYIANF. Over 257-419 the chain is Extracellular; it reads TALLSSGSEQ…EGWSPLQPQA (163 aa). A helical membrane pass occupies residues 420 to 440; sequence LGGLFLTLAIGLALGVIAAMV. Over 441-487 the chain is Cytoplasmic; sequence ELSNKSRHAAGHIKKSCCSIFTEEMCTRLRIKENTRQTQETSGRANA.

Belongs to the glutamate-gated ion channel (TC 1.A.10.1) family.

The protein resides in the cell membrane. Its subcellular location is the postsynaptic cell membrane. Its function is as follows. Receptor for glutamate. L-glutamate acts as an excitatory neurotransmitter at many synapses in the central nervous system. The postsynaptic actions of Glu are mediated by a variety of receptors that are named according to their selective agonists. The protein is Probable glutamate receptor (KBP) of Gallus gallus (Chicken).